Reading from the N-terminus, the 137-residue chain is Basic phospholipase A2 homolog Ts-R6 (137 aa).

The first 16 residues, 1-16 (MRTLWIMAVLLLGVEG), serve as a signal peptide directing secretion. 7 disulfides stabilise this stretch: cysteine 42-cysteine 130, cysteine 44-cysteine 60, cysteine 59-cysteine 110, cysteine 65-cysteine 137, cysteine 66-cysteine 103, cysteine 73-cysteine 97, and cysteine 91-cysteine 101.

In terms of tissue distribution, expressed by the venom gland.

Its subcellular location is the secreted. In terms of biological role, snake venom phospholipase A2 homolog that induces local edema a few hours after injection (5-10 ug) in the hind paw and shows weak anticoagulant and myotoxic activities. This Trimeresurus stejnegeri (Chinese green tree viper) protein is Basic phospholipase A2 homolog Ts-R6.